Reading from the N-terminus, the 203-residue chain is Translation initiation factor IF-3 (203 aa).

The protein belongs to the IF-3 family. In terms of assembly, monomer.

It is found in the cytoplasm. In terms of biological role, IF-3 binds to the 30S ribosomal subunit and shifts the equilibrium between 70S ribosomes and their 50S and 30S subunits in favor of the free subunits, thus enhancing the availability of 30S subunits on which protein synthesis initiation begins. The sequence is that of Translation initiation factor IF-3 from Corynebacterium efficiens (strain DSM 44549 / YS-314 / AJ 12310 / JCM 11189 / NBRC 100395).